A 335-amino-acid chain; its full sequence is MNKINAAITAVGAYLPEDVITNDDLEKMVDTNDEWIMTRVGIKERRILRDKNKGASYLAIRAAQDLFDRHGIDPKSIDGLILATNSSDYHFPSTASIVAHEIGCGDIFSFDMQAACPTFIYALEVGANFIRSGRYSKILVIATEKMTAFTDYTDRATCPLFGDGAGCVLLEATEEEVGVMDAVLHSNGIGKDHLIMKAGGSACPATHETVDNRWHYVYQEGQVVFKHAVVDMCNSCVEIMERNNLSHDDITWVVPHQANLRIIDAVARRMGVPYEKVMVNIERYGNTSSATIPICLWEWEHKLKKGDVLVMTSFGAGFTWGAVYVKWAYDGSTVR.

Active-site residues include Cys-116 and His-256. An ACP-binding region spans residues 257-261 (QANLR). The active site involves Asn-286.

It belongs to the thiolase-like superfamily. FabH family. Homodimer.

Its subcellular location is the cytoplasm. It carries out the reaction malonyl-[ACP] + acetyl-CoA + H(+) = 3-oxobutanoyl-[ACP] + CO2 + CoA. It participates in lipid metabolism; fatty acid biosynthesis. Catalyzes the condensation reaction of fatty acid synthesis by the addition to an acyl acceptor of two carbons from malonyl-ACP. Catalyzes the first condensation reaction which initiates fatty acid synthesis and may therefore play a role in governing the total rate of fatty acid production. Possesses both acetoacetyl-ACP synthase and acetyl transacylase activities. Its substrate specificity determines the biosynthesis of branched-chain and/or straight-chain of fatty acids. In Porphyromonas gingivalis (strain ATCC 33277 / DSM 20709 / CIP 103683 / JCM 12257 / NCTC 11834 / 2561), this protein is Beta-ketoacyl-[acyl-carrier-protein] synthase III.